The chain runs to 726 residues: Catalase-peroxidase (726 aa).

The disordered stretch occupies residues 1 to 33; that stretch reads MSTSDDIHNTTATGKCPFHQGGHDQSAGGGTTT. Positions 105–226 form a cross-link, tryptophyl-tyrosyl-methioninium (Trp-Tyr) (with M-252); it reads WHGAGTYRSI…LGATEMGLIY (122 aa). Catalysis depends on His-106, which acts as the Proton acceptor. The tryptophyl-tyrosyl-methioninium (Tyr-Met) (with W-105) cross-link spans 226–252; the sequence is YVNPEGPDHSGEPLSAAAAIRATFGNM. Residue His-267 participates in heme b binding.

This sequence belongs to the peroxidase family. Peroxidase/catalase subfamily. As to quaternary structure, homodimer or homotetramer. The cofactor is heme b. Post-translationally, formation of the three residue Trp-Tyr-Met cross-link is important for the catalase, but not the peroxidase activity of the enzyme.

The catalysed reaction is H2O2 + AH2 = A + 2 H2O. The enzyme catalyses 2 H2O2 = O2 + 2 H2O. Bifunctional enzyme with both catalase and broad-spectrum peroxidase activity. The polypeptide is Catalase-peroxidase (Escherichia coli (strain UTI89 / UPEC)).